The primary structure comprises 337 residues: Biotin synthase (337 aa).

The Radical SAM core domain occupies 58-283 (EDVEVEGIVS…RTVLRYAGGR (226 aa)). [4Fe-4S] cluster contacts are provided by cysteine 73, cysteine 77, and cysteine 80. Cysteine 116, cysteine 149, cysteine 208, and arginine 278 together coordinate [2Fe-2S] cluster.

It belongs to the radical SAM superfamily. Biotin synthase family. As to quaternary structure, homodimer. Requires [4Fe-4S] cluster as cofactor. The cofactor is [2Fe-2S] cluster.

It carries out the reaction (4R,5S)-dethiobiotin + (sulfur carrier)-SH + 2 reduced [2Fe-2S]-[ferredoxin] + 2 S-adenosyl-L-methionine = (sulfur carrier)-H + biotin + 2 5'-deoxyadenosine + 2 L-methionine + 2 oxidized [2Fe-2S]-[ferredoxin]. Its pathway is cofactor biosynthesis; biotin biosynthesis; biotin from 7,8-diaminononanoate: step 2/2. Catalyzes the conversion of dethiobiotin (DTB) to biotin by the insertion of a sulfur atom into dethiobiotin via a radical-based mechanism. In Pseudarthrobacter chlorophenolicus (strain ATCC 700700 / DSM 12829 / CIP 107037 / JCM 12360 / KCTC 9906 / NCIMB 13794 / A6) (Arthrobacter chlorophenolicus), this protein is Biotin synthase.